We begin with the raw amino-acid sequence, 1282 residues long: Clustered mitochondria protein homolog (1282 aa).

Positions 1–43 (MEQNNGTTEHPKEVLDQTNPSNEVTGVPNGNHAEGEGDQNAGE) are disordered. A Clu domain is found at 341-585 (DITRPQENYL…RITPLDVLWY (245 aa)). Basic and acidic residues-rich tracts occupy residues 631–641 (EAEEKAEESKP) and 653–669 (ESEK…RVDI). 2 disordered regions span residues 631–669 (EAEE…RVDI) and 892–936 (RSQL…PAPA). The segment covering 924 to 936 (QASPRPAQSPAPA) has biased composition (low complexity). Residues 1003 to 1036 (AKLYHQLSMLYYQSDDKDAAVELARKAVIVTERT) form a TPR repeat. The tract at residues 1202-1282 (ANLPTRLGTK…SKQSTVKPSS (81 aa)) is disordered. A compositionally biased stretch (polar residues) spans 1212-1223 (PQPQVGQTTSEM). Over residues 1257-1272 (TKQKKRAAARNPKLRG) the composition is skewed to basic residues. Polar residues predominate over residues 1273–1282 (SKQSTVKPSS).

This sequence belongs to the CLU family. In terms of assembly, may associate with the eukaryotic translation initiation factor 3 (eIF-3) complex.

The protein resides in the cytoplasm. In terms of biological role, mRNA-binding protein involved in proper cytoplasmic distribution of mitochondria. This is Clustered mitochondria protein homolog from Coccidioides immitis (strain RS) (Valley fever fungus).